We begin with the raw amino-acid sequence, 66 residues long: Large ribosomal subunit protein bL35 (66 aa).

This sequence belongs to the bacterial ribosomal protein bL35 family.

The polypeptide is Large ribosomal subunit protein bL35 (Brucella melitensis biotype 1 (strain ATCC 23456 / CCUG 17765 / NCTC 10094 / 16M)).